The primary structure comprises 1210 residues: A disintegrin and metalloproteinase with thrombospondin motifs 19 (1210 aa).

A signal peptide spans 1-30; it reads MGPEMRLTRICCCCCLLYQLGFLSHGTTSG. The propeptide occupies 31–319; sequence LQLTPDLEEW…KIADNRREKR (289 aa). Asn54 carries an N-linked (GlcNAc...) asparagine glycan. The tract at residues 55–166 is disordered; that stretch reads ATGLSGGSSD…PAQQEEPSAE (112 aa). Residues 69–78 are compositionally biased toward gly residues; it reads RSSGGGGRGQ. The span at 84–98 shows a compositional bias: basic and acidic residues; the sequence is REVRSVARAPQEEAT. Acidic residues predominate over residues 113 to 122; that stretch reads GAEDEEELES. The segment covering 130-139 has biased composition (polar residues); the sequence is SGDTALSSGT. The segment covering 143–158 has biased composition (pro residues); sequence WQPPLPPQRPSSPPPA. Asn263 is a glycosylation site (N-linked (GlcNAc...) asparagine). The Cysteine switch signature appears at 295–302; sequence HHCGVISD. A Zn(2+)-binding site is contributed by Cys297. Positions 328 to 548 constitute a Peptidase M12B domain; that stretch reads YNIETVVVAD…KASSCLLHTD (221 aa). 11 disulfides stabilise this stretch: Cys404–Cys469, Cys444–Cys451, Cys463–Cys543, Cys502–Cys527, Cys572–Cys596, Cys583–Cys604, Cys591–Cys623, Cys617–Cys628, Cys648–Cys683, Cys652–Cys688, and Cys663–Cys673. Position 485 (His485) interacts with Zn(2+). Glu486 is a catalytic residue. Zn(2+)-binding residues include His489 and His495. A Disintegrin domain is found at 549 to 636; sequence PQSLSSVLVP…ECTRRTPAPE (88 aa). The TSP type-1 1 domain occupies 637–689; sequence HLAGEWSPWSSCSRSCSSGVSSRERKCPGLGSEARDCNGPRKQYRICENPPCP. Residues 794 to 917 are spacer; that stretch reads VIKGDFNHTR…PDNQSSKEPG (124 aa). 5 N-linked (GlcNAc...) asparagine glycosylation sites follow: Asn800, Asn910, Asn931, Asn952, and Asn1012. 4 TSP type-1 domains span residues 918–978, 979–1040, 1042–1086, and 1090–1147; these read PLFM…NEQP, CQTR…QDCM, VWEA…EDCE, and KCYV…QPCN. 3 disulfide bridges follow: Cys991-Cys1034, Cys995-Cys1039, and Cys1006-Cys1023. One can recognise a PLAC domain in the interval 1163-1202; the sequence is LTFKCLGDQWPVYCRVIREKNLCQDMRWYQRCCETCRDFY.

Zn(2+) is required as a cofactor. Post-translationally, the precursor is cleaved by a furin endopeptidase. Glycosylated. Can be O-fucosylated by POFUT2 on a serine or a threonine residue found within the consensus sequence C1-X(2)-(S/T)-C2-G of the TSP type-1 repeat domains where C1 and C2 are the first and second cysteine residue of the repeat, respectively. Fucosylated repeats can then be further glycosylated by the addition of a beta-1,3-glucose residue by the glucosyltransferase, B3GALTL. Fucosylation mediates the efficient secretion of ADAMTS family members. Can also be C-glycosylated with one or two mannose molecules on tryptophan residues within the consensus sequence W-X-X-W of the TPRs, and N-glycosylated. These other glycosylations can also facilitate secretion. Expressed predominantly in fetal ovary, low levels of expression is also detected in kidney, heart, skeletal muscle, lung and testis.

The protein localises to the secreted. It is found in the extracellular space. It localises to the extracellular matrix. This Mus musculus (Mouse) protein is A disintegrin and metalloproteinase with thrombospondin motifs 19 (Adamts19).